Here is a 744-residue protein sequence, read N- to C-terminus: Probable ubiquitin carboxyl-terminal hydrolase MINDY-4 (744 aa).

Ser-143, Ser-220, and Ser-224 each carry phosphoserine. The disordered stretch occupies residues 211-358; it reads GMMAGPVASS…QLVSDRTDDK (148 aa). Positions 265–277 are enriched in low complexity; that stretch reads VPDSSSDSVSRSP. Positions 290–299 are enriched in polar residues; the sequence is NVTSSSQGLS. Ser-295 carries the phosphoserine modification. Positions 300-310 are enriched in basic and acidic residues; it reads QRDRPRLRSVS. Cys-443 acts as the Nucleophile in catalysis. The active-site Proton acceptor is His-664.

It belongs to the MINDY deubiquitinase family. FAM188 subfamily.

The catalysed reaction is Thiol-dependent hydrolysis of ester, thioester, amide, peptide and isopeptide bonds formed by the C-terminal Gly of ubiquitin (a 76-residue protein attached to proteins as an intracellular targeting signal).. Probable hydrolase that can remove 'Lys-48'-linked conjugated ubiquitin from proteins. The polypeptide is Probable ubiquitin carboxyl-terminal hydrolase MINDY-4 (Mindy4) (Mus musculus (Mouse)).